The following is a 234-amino-acid chain: MPKHGKKYRKATEGTEQIGLTVEQAVASAVEKAYAKFDETVDVAINLGVDPKYSDQMIRGAVTLPNGLGKEIRVACFVSGEKEAEAKEAGADFVGGDDLVAKVKDGWLDFDKAIATPDMMAKVGQIGRVLGPRGLMPNAKTGTVTFDVASAVKEVKAGRVEFKVDKAGVLHAPIGKVSFGAEKLLENLKSLLETVNKLKPSSAKGTYMKAVAVATTMGPGFKIDPLAARKYSES.

Belongs to the universal ribosomal protein uL1 family. Part of the 50S ribosomal subunit.

Functionally, binds directly to 23S rRNA. The L1 stalk is quite mobile in the ribosome, and is involved in E site tRNA release. Its function is as follows. Protein L1 is also a translational repressor protein, it controls the translation of the L11 operon by binding to its mRNA. The sequence is that of Large ribosomal subunit protein uL1 from Maridesulfovibrio salexigens (strain ATCC 14822 / DSM 2638 / NCIMB 8403 / VKM B-1763) (Desulfovibrio salexigens).